The following is a 353-amino-acid chain: Quinolinate synthase (353 aa).

Residues His-47 and Ser-68 each coordinate iminosuccinate. Position 113 (Cys-113) interacts with [4Fe-4S] cluster. Residues 139–141 (YAN) and Ser-156 each bind iminosuccinate. Cys-200 contacts [4Fe-4S] cluster. Residues 226–228 (HPE) and Thr-243 contribute to the iminosuccinate site. [4Fe-4S] cluster is bound at residue Cys-297.

Belongs to the quinolinate synthase family. Type 1 subfamily. The cofactor is [4Fe-4S] cluster.

It localises to the cytoplasm. The catalysed reaction is iminosuccinate + dihydroxyacetone phosphate = quinolinate + phosphate + 2 H2O + H(+). It functions in the pathway cofactor biosynthesis; NAD(+) biosynthesis; quinolinate from iminoaspartate: step 1/1. Functionally, catalyzes the condensation of iminoaspartate with dihydroxyacetone phosphate to form quinolinate. This chain is Quinolinate synthase, found in Yersinia pseudotuberculosis serotype O:3 (strain YPIII).